The following is a 184-amino-acid chain: Small ribosomal subunit protein uS7 (184 aa).

The protein belongs to the universal ribosomal protein uS7 family. As to quaternary structure, part of the 30S ribosomal subunit.

In terms of biological role, one of the primary rRNA binding proteins, it binds directly to 16S rRNA where it nucleates assembly of the head domain of the 30S subunit. Is located at the subunit interface close to the decoding center. The chain is Small ribosomal subunit protein uS7 from Thermoplasma volcanium (strain ATCC 51530 / DSM 4299 / JCM 9571 / NBRC 15438 / GSS1).